A 160-amino-acid polypeptide reads, in one-letter code: Transcription elongation factor GreA (160 aa).

A coiled-coil region spans residues 50–70 (AAREQQSFNEGRIQELEAKLS).

It belongs to the GreA/GreB family.

Functionally, necessary for efficient RNA polymerase transcription elongation past template-encoded arresting sites. The arresting sites in DNA have the property of trapping a certain fraction of elongating RNA polymerases that pass through, resulting in locked ternary complexes. Cleavage of the nascent transcript by cleavage factors such as GreA or GreB allows the resumption of elongation from the new 3'terminus. GreA releases sequences of 2 to 3 nucleotides. The sequence is that of Transcription elongation factor GreA from Legionella pneumophila (strain Paris).